The following is a 989-amino-acid chain: Phosphoenolpyruvate carboxylase (989 aa).

Catalysis depends on residues His-175 and Lys-630.

The protein belongs to the PEPCase type 1 family. Mg(2+) is required as a cofactor.

It catalyses the reaction oxaloacetate + phosphate = phosphoenolpyruvate + hydrogencarbonate. Functionally, forms oxaloacetate, a four-carbon dicarboxylic acid source for the tricarboxylic acid cycle. This is Phosphoenolpyruvate carboxylase from Prochlorococcus marinus (strain MIT 9312).